A 954-amino-acid polypeptide reads, in one-letter code: Lysine-specific demethylase JMJ14 (954 aa).

The tract at residues 1 to 46 (MDQLASLAESVAMEEDSEKQSIKGESSLEPDSTPSSPKITARWNPS) is disordered. The segment covering 29-38 (EPDSTPSSPK) has biased composition (polar residues). Positions 56 to 97 (APIFYPTNEDFDDPLGYIEKLRSKAESYGICRIVPPVAWRPP) constitute a JmjN domain. Residues 136 to 143 (RKRRRISK) carry the Nuclear localization signal 1 motif. The tract at residues 148 to 170 (RRKRDSGCDTASSGSSDSEGKFG) is disordered. The JmjC domain occupies 263 to 429 (QYSQCGWNLN…HGQNAVEGYS (167 aa)). Fe cation contacts are provided by histidine 309, glutamate 311, and histidine 397. The Nuclear localization signal 2 motif lies at 470-477 (WKRVCSED). Zn(2+)-binding residues include cysteine 519, cysteine 522, cysteine 533, cysteine 535, cysteine 542, histidine 545, cysteine 550, and cysteine 552. A C5HC2 zinc finger spans residues 519-571 (CFLCFYDLHMSASSCKCSPNRFACLIHAKDLCSCESKDRYILIRHTLDELWAL). The segment at 641-670 (SNKEVQLKQDGDSDVNRHGHESERNHVHGI) is disordered. A compositionally biased stretch (basic and acidic residues) spans 645–670 (VQLKQDGDSDVNRHGHESERNHVHGI). In terms of domain architecture, FYR N-terminal spans 726 to 784 (ATNRLSLSVELLSSGSLVVKKLWCSKQAIYPKGFKSRVKFLSVLDPTNLTNYISEVLDA). The 91-residue stretch at 786–876 (LLGPLFRVSV…HQLEEYWNQK (91 aa)) folds into the FYR C-terminal domain. The interval 884 to 905 (EPIKEGEKDDTEKGGASDPSLD) is disordered. Over residues 885–905 (PIKEGEKDDTEKGGASDPSLD) the composition is skewed to basic and acidic residues.

Belongs to the JARID1 histone demethylase family. In terms of assembly, interacts with NAC050 and NAC051/NAC052. Interacts with THAL in the nucleus. Fe(2+) serves as cofactor. As to expression, expressed in shoot apex, primary root tip, trichomes of young leaves, leaf vascular tissues, anther filaments and styles. Detected in inflorescences, leaves, stems, roots and siliques. Mostly expressed in floral organs, and, at low levels, in other organs.

Its subcellular location is the nucleus. It localises to the nucleoplasm. The enzyme catalyses N(6),N(6),N(6)-trimethyl-L-lysyl(4)-[histone H3] + 2-oxoglutarate + O2 = N(6),N(6)-dimethyl-L-lysyl(4)-[histone H3] + formaldehyde + succinate + CO2. It carries out the reaction N(6),N(6)-dimethyl-L-lysyl(4)-[histone H3] + 2-oxoglutarate + O2 = N(6)-methyl-L-lysyl(4)-[histone H3] + formaldehyde + succinate + CO2. The catalysed reaction is N(6)-methyl-L-lysyl(4)-[histone H3] + 2-oxoglutarate + O2 = L-lysyl(4)-[histone H3] + formaldehyde + succinate + CO2. It catalyses the reaction N(6),N(6),N(6)-trimethyl-L-lysyl(4)-[histone H3] + 3 2-oxoglutarate + 3 O2 = L-lysyl(4)-[histone H3] + 3 formaldehyde + 3 succinate + 3 CO2. Its function is as follows. Transcriptional repressor. Histone demethylase that demethylates 'Lys-4' (H3K4me) of histone H3 with a higher activity for H3K4me3 and H3K4me2 than H3K4me1. No activity on H3K9me3/2, H3K36me3/2 and H3K27me3/2. Function as a nocturne 'eraser' to counteract the diurnal 'writer' methylase activity of ATXR3/SDG2 thus orchestrating the circadian rhythm of histone modifications (e.g. H3K4me3) and modulating the rhythmic expression of diurnal target genes; this mechanism also relies on the circadian clock oscillators CCA1 and LHY. Involved in a negative regulation of root meristem growth upon suboptimal root growth conditions. Represses FT and TSF expression to inhibit the floral transition. Binds around the transcription start site of the FT locus. Involved in the DRM2-mediated maintenance of DNA methylation, but not required for the de novo DNA methylation. Required for demethylating histone H3K4me3 at the target of RNA silencing. Counteracts the DNA methylation of expressed transgenes; specific attenuation of transgene DNA methylation enhances the production of aberrant RNAs (e.g. uncapped and antisense) that readily induce systemic RDR6-dependent post-transcriptional transgene silencing (PTGS) spreading. Together with NAC051/NAC052 and NAC050, regulates gene expression and flowering time, probably by the promotion of RNA-mediated gene silencing. Together with JMJ16 and JMJ17, required for plant growth and development. Promotes local and systemic immunity (especially toward the bacterial pathogen Pseudomonas syringae Pst DC3000 avrRpt2) by regulating positively pathogen-induced H3K4me3 enrichment and expression of defense genes involved in salicylic acid (SA)- and pipecolic acid (Pip)-mediated defense pathways (e.g. PR1, FMO1, ALD1 and SARD4). The chain is Lysine-specific demethylase JMJ14 from Arabidopsis thaliana (Mouse-ear cress).